The chain runs to 89 residues: Small ribosomal subunit protein uS15 (89 aa).

Belongs to the universal ribosomal protein uS15 family. As to quaternary structure, part of the 30S ribosomal subunit. Forms a bridge to the 50S subunit in the 70S ribosome, contacting the 23S rRNA.

Its function is as follows. One of the primary rRNA binding proteins, it binds directly to 16S rRNA where it helps nucleate assembly of the platform of the 30S subunit by binding and bridging several RNA helices of the 16S rRNA. Functionally, forms an intersubunit bridge (bridge B4) with the 23S rRNA of the 50S subunit in the ribosome. The sequence is that of Small ribosomal subunit protein uS15 from Sinorhizobium medicae (strain WSM419) (Ensifer medicae).